Here is a 324-residue protein sequence, read N- to C-terminus: Ribonucleoside-diphosphate reductase subunit beta nrdF2 (324 aa).

Glu103 and His106 together coordinate Fe cation. The active site involves Tyr110. Positions 163, 197, and 200 each coordinate Fe cation.

This sequence belongs to the ribonucleoside diphosphate reductase small chain family. As to quaternary structure, tetramer of two alpha and two beta subunits. Fe cation is required as a cofactor.

It carries out the reaction a 2'-deoxyribonucleoside 5'-diphosphate + [thioredoxin]-disulfide + H2O = a ribonucleoside 5'-diphosphate + [thioredoxin]-dithiol. Its function is as follows. Provides the precursors necessary for DNA synthesis. Catalyzes the biosynthesis of deoxyribonucleotides from the corresponding ribonucleotides. The protein is Ribonucleoside-diphosphate reductase subunit beta nrdF2 (nrdF2) of Mycobacterium tuberculosis (strain CDC 1551 / Oshkosh).